We begin with the raw amino-acid sequence, 169 residues long: FAM231A/C-like protein LOC102723383 (169 aa).

Residues 82–140 (LIRSGSSQNESQEDQGAGLISQAGLKADNRRESSTWANEVEDRRPQCTPALNLTPSHPH) are disordered.

The protein belongs to the FAM231 family.

This is FAM231A/C-like protein LOC102723383 from Homo sapiens (Human).